We begin with the raw amino-acid sequence, 356 residues long: MTTYLSLGLEGSANKLGVGVIKHTVTDANAENGFSTDILSNIRDTYITPPGEGFLPRDTARHHRNWVVRIIKRALDEAKISDPTKLHCISFTQGPGMGAPLQSVVIAARTIAQMWGVPLVGVNHCVGHIEMGRTITGATNPVVLYVSGGNTQVIAYSKQRYRIFGETLDIAVGNCLDRFARVLKIPNAPSPGYNIEQLAKKGKKYVPLPYTVKGMDLSMSGVLQFVESLAKRFQAGDLVVDGHQVTAEDLCFSLQETLFAMLVEITERAMAHVNSQQVLIVGGVGCNERLQEMMGIMARDRNGSVYATDERFCIDNGIMIAHAGLLAWRQGFETKMEKTQCTQRFRTDEVLVDWRV.

A divalent metal cation contacts are provided by histidine 124, histidine 128, and tyrosine 145. Residues 145–149, aspartate 177, glycine 192, glutamate 196, and asparagine 287 each bind substrate; that span reads YVSGG. Position 315 (aspartate 315) interacts with a divalent metal cation.

The protein belongs to the KAE1 / TsaD family. As to quaternary structure, component of the EKC/KEOPS complex composed of at least BUD32, CGI121, GON7, KAE1 and PCC1; the whole complex dimerizes. A divalent metal cation serves as cofactor.

The protein resides in the cytoplasm. Its subcellular location is the nucleus. The catalysed reaction is L-threonylcarbamoyladenylate + adenosine(37) in tRNA = N(6)-L-threonylcarbamoyladenosine(37) in tRNA + AMP + H(+). Functionally, component of the EKC/KEOPS complex that is required for the formation of a threonylcarbamoyl group on adenosine at position 37 (t(6)A37) in tRNAs that read codons beginning with adenine. The complex is probably involved in the transfer of the threonylcarbamoyl moiety of threonylcarbamoyl-AMP (TC-AMP) to the N6 group of A37. KAE1 likely plays a direct catalytic role in this reaction, but requires other protein(s) of the complex to fulfill this activity. The EKC/KEOPS complex also promotes both telomere uncapping and telomere elongation. The complex is required for efficient recruitment of transcriptional coactivators. In Yarrowia lipolytica (strain CLIB 122 / E 150) (Yeast), this protein is tRNA N6-adenosine threonylcarbamoyltransferase.